The primary structure comprises 373 residues: Flagellar P-ring protein (373 aa).

Positions 1–26 (MKLFFRIVTLVAVVAMSLADMAPAWA) are cleaved as a signal peptide.

Belongs to the FlgI family. The basal body constitutes a major portion of the flagellar organelle and consists of four rings (L,P,S, and M) mounted on a central rod.

Its subcellular location is the periplasm. The protein resides in the bacterial flagellum basal body. In terms of biological role, assembles around the rod to form the L-ring and probably protects the motor/basal body from shearing forces during rotation. This is Flagellar P-ring protein from Rhizobium etli (strain ATCC 51251 / DSM 11541 / JCM 21823 / NBRC 15573 / CFN 42).